The chain runs to 84 residues: Cell division topological specificity factor (84 aa).

The protein belongs to the MinE family.

In terms of biological role, prevents the cell division inhibition by proteins MinC and MinD at internal division sites while permitting inhibition at polar sites. This ensures cell division at the proper site by restricting the formation of a division septum at the midpoint of the long axis of the cell. The chain is Cell division topological specificity factor from Pseudomonas fluorescens (strain ATCC BAA-477 / NRRL B-23932 / Pf-5).